We begin with the raw amino-acid sequence, 487 residues long: Solute carrier family 22 member 15-like (487 aa).

The chain crosses the membrane as a helical span at residues Phe-23–Ala-43. A glycan (N-linked (GlcNAc...) asparagine) is linked at Asn-70. The next 11 helical transmembrane spans lie at Leu-90–Ser-110, Pro-117–Pro-137, Val-141–Phe-161, Ser-178–Ile-198, Thr-203–Pro-223, Ile-286–Ala-306, Leu-315–Ile-335, Ala-345–Glu-365, Thr-374–Tyr-394, Leu-408–Met-428, and Met-435–Pro-455.

It belongs to the major facilitator (TC 2.A.1) superfamily. Organic cation transporter (TC 2.A.1.19) family.

The protein localises to the membrane. Probably transports organic cations. The polypeptide is Solute carrier family 22 member 15-like (slc22a15b) (Xenopus laevis (African clawed frog)).